Reading from the N-terminus, the 286-residue chain is Shikimate dehydrogenase (NADP(+)) (286 aa).

Residues 21 to 23 and threonine 68 contribute to the shikimate site; that span reads TLS. Lysine 72 acts as the Proton acceptor in catalysis. Glutamate 84 contacts NADP(+). Shikimate-binding residues include asparagine 93 and aspartate 108. Residues 132–136 and leucine 230 contribute to the NADP(+) site; that span reads GNGGA. A shikimate-binding site is contributed by tyrosine 232. Position 253 (glycine 253) interacts with NADP(+).

The protein belongs to the shikimate dehydrogenase family. As to quaternary structure, homodimer.

It catalyses the reaction shikimate + NADP(+) = 3-dehydroshikimate + NADPH + H(+). It functions in the pathway metabolic intermediate biosynthesis; chorismate biosynthesis; chorismate from D-erythrose 4-phosphate and phosphoenolpyruvate: step 4/7. Functionally, involved in the biosynthesis of the chorismate, which leads to the biosynthesis of aromatic amino acids. Catalyzes the reversible NADPH linked reduction of 3-dehydroshikimate (DHSA) to yield shikimate (SA). This chain is Shikimate dehydrogenase (NADP(+)), found in Microcystis aeruginosa (strain NIES-843 / IAM M-2473).